We begin with the raw amino-acid sequence, 953 residues long: MEKTYNPTSIEQDLYKTWEEQGYFKPHGDTSKDAYSIMIPPPNVTGSLHMGHAFQDTIMDTLIRCQRMKGKNTLWQVGTDHAGIATQMVVERKIAAEEGKTKHDYGRDAFIDKIWEWKAESGGTITKQLRRLGASVDWDRERFTMDDGFYKAVQEVFVRLYKDDLIYRGKRLVNWDPKLHTAISDLEVENKETKGHMWHFRYPLADGVKTADGKDYIVVATTRPETMLGDTGVAVNPEDPRYKDLIGKEIILPIVGRRIPIVGDEHADMEKGTGCVKITPAHDFNDYEVGKRHQLPMINILTFDANIRDAAEVFNSNGEASNAYGTEIPAKYQGMERFAARKAIVAEFEELGLLQEIKDHDLTVPYGDRGGVVIEPMLTDQWYVRAGILAKPAVEAVENGDIQFVPKQYENMYFSWMRDIQDWCISRQLWWGHRIPAWYDEQGNVFVGRNEEEVRAENNIAADVALRQDDDVLDTWFSSALWTFGTLGWPEKTPELKVFHPTDVLVTGFDIIFFWVARMIMMTMHFCKDEDGKAQVPFKTVYVTGLIRDENGDKMSKSKGNVLDPIDMIDGIDLESLVAKRTGNMMQPQLAAKIEKNTRKTFENGIEAYGTDSLRFTLAAMASTGRDINWDMKRLEGYRNFCNKLWNASRYVLMNTEEQDCGFAAGAELEYSLADKWIESQFELAAKEFNGHIDNFRLDMAANTLYEFIWNQFCDWYLELTKPVLWKGTEAQQRATRRTLITVLEKTLRLAHPVIPYITETIWQSVKPLVDGVEGDTIMLQALPQYDVANFNQEALDDIEWVKAFITSIRNLRAEYDINPGKPLEVMLKAANEQDAARIEANKPVLVSLAKLESIRVLADGEATPACATALVGKSELMIPMAGLIDKDAELDRLAKEIAKTQGEIARIEGKLGNEGFVAKAPEAVITKEREKLAGYQEALVKLEQQKATIAAL.

Residues 42-52 (PNVTGSLHMGH) carry the 'HIGH' region motif. Residues 554–558 (KMSKS) carry the 'KMSKS' region motif. Lys-557 contributes to the ATP binding site. The stretch at 884–952 (LIDKDAELDR…LEQQKATIAA (69 aa)) forms a coiled coil.

This sequence belongs to the class-I aminoacyl-tRNA synthetase family. ValS type 1 subfamily. In terms of assembly, monomer.

It is found in the cytoplasm. It carries out the reaction tRNA(Val) + L-valine + ATP = L-valyl-tRNA(Val) + AMP + diphosphate. Functionally, catalyzes the attachment of valine to tRNA(Val). As ValRS can inadvertently accommodate and process structurally similar amino acids such as threonine, to avoid such errors, it has a 'posttransfer' editing activity that hydrolyzes mischarged Thr-tRNA(Val) in a tRNA-dependent manner. This Vibrio cholerae serotype O1 (strain ATCC 39315 / El Tor Inaba N16961) protein is Valine--tRNA ligase.